A 293-amino-acid polypeptide reads, in one-letter code: DNA-directed RNA polymerase III subunit RPC6 (293 aa).

Belongs to the eukaryotic RPC34/RPC39 RNA polymerase subunit family. Component of the RNA polymerase III (Pol III) complex consisting of 17 subunits.

The protein localises to the nucleus. Functionally, DNA-dependent RNA polymerase catalyzes the transcription of DNA into RNA using the four ribonucleoside triphosphates as substrates. Specific peripheric component of RNA polymerase III which synthesizes small RNAs, such as 5S rRNA and tRNAs. The protein is DNA-directed RNA polymerase III subunit RPC6 of Drosophila melanogaster (Fruit fly).